Reading from the N-terminus, the 388-residue chain is Succinate--CoA ligase [ADP-forming] subunit beta (388 aa).

Residues 9–244 form the ATP-grasp domain; it reads KQLFARYGLP…QSQEDPREAQ (236 aa). Residues lysine 46, 53 to 55, glutamate 99, threonine 102, and glutamate 107 each bind ATP; that span reads GRG. The Mg(2+) site is built by asparagine 199 and aspartate 213. Residues asparagine 264 and 321 to 323 each bind substrate; that span reads GIV.

The protein belongs to the succinate/malate CoA ligase beta subunit family. As to quaternary structure, heterotetramer of two alpha and two beta subunits. Requires Mg(2+) as cofactor.

The catalysed reaction is succinate + ATP + CoA = succinyl-CoA + ADP + phosphate. The enzyme catalyses GTP + succinate + CoA = succinyl-CoA + GDP + phosphate. Its pathway is carbohydrate metabolism; tricarboxylic acid cycle; succinate from succinyl-CoA (ligase route): step 1/1. Functionally, succinyl-CoA synthetase functions in the citric acid cycle (TCA), coupling the hydrolysis of succinyl-CoA to the synthesis of either ATP or GTP and thus represents the only step of substrate-level phosphorylation in the TCA. The beta subunit provides nucleotide specificity of the enzyme and binds the substrate succinate, while the binding sites for coenzyme A and phosphate are found in the alpha subunit. The sequence is that of Succinate--CoA ligase [ADP-forming] subunit beta from Escherichia coli O139:H28 (strain E24377A / ETEC).